Reading from the N-terminus, the 150-residue chain is MSISSSSSSSSSSSSCLLLISLMLLAASCQGRPDLQHRNHKSQLAGLFGAEVAALLEDAGAADGSSGEEAALSQRAPPSIRALHPRSGRLGLRDDLEAEPPAENKPRRRLLKDFMSSRKMFRGRTKKMQQGRGCFGMKLDRIGSMSGLGC.

A signal peptide spans 1–31 (MSISSSSSSSSSSSSCLLLISLMLLAASCQG). Residues 32–127 (RPDLQHRNHK…RKMFRGRTKK (96 aa)) constitute a propeptide that is removed on maturation. Over residues 60–73 (GAADGSSGEEAALS) the composition is skewed to low complexity. The interval 60–109 (GAADGSSGEEAALSQRAPPSIRALHPRSGRLGLRDDLEAEPPAENKPRRR) is disordered. A disulfide bridge links Cys-134 with Cys-150.

It belongs to the natriuretic peptide family. Expressed in brain, but not in atrium or ventricle.

Its subcellular location is the secreted. Its function is as follows. Hormone which plays a role in endochondral ossification through regulation of cartilaginous growth plate chondrocytes proliferation and differentiation. May also be vasoactive and natriuretic. This Acipenser transmontanus (White sturgeon) protein is C-type natriuretic peptide (cnp).